The chain runs to 327 residues: GTP 3',8-cyclase (327 aa).

A Radical SAM core domain is found at 8-232; it reads AFARKFYYLR…LQRSRSDGPA (225 aa). GTP is bound at residue Arg17. [4Fe-4S] cluster is bound by residues Cys24 and Cys28. Tyr30 is a binding site for S-adenosyl-L-methionine. Cys31 provides a ligand contact to [4Fe-4S] cluster. Arg66 provides a ligand contact to GTP. Gly70 contacts S-adenosyl-L-methionine. Residue Thr97 participates in GTP binding. Ser121 is an S-adenosyl-L-methionine binding site. Lys158 serves as a coordination point for GTP. An S-adenosyl-L-methionine-binding site is contributed by Met192. The [4Fe-4S] cluster site is built by Cys255 and Cys258. A GTP-binding site is contributed by 260 to 262; that stretch reads RLR. A [4Fe-4S] cluster-binding site is contributed by Cys272.

The protein belongs to the radical SAM superfamily. MoaA family. Monomer and homodimer. Requires [4Fe-4S] cluster as cofactor.

It catalyses the reaction GTP + AH2 + S-adenosyl-L-methionine = (8S)-3',8-cyclo-7,8-dihydroguanosine 5'-triphosphate + 5'-deoxyadenosine + L-methionine + A + H(+). Its pathway is cofactor biosynthesis; molybdopterin biosynthesis. Catalyzes the cyclization of GTP to (8S)-3',8-cyclo-7,8-dihydroguanosine 5'-triphosphate. The sequence is that of GTP 3',8-cyclase from Photorhabdus laumondii subsp. laumondii (strain DSM 15139 / CIP 105565 / TT01) (Photorhabdus luminescens subsp. laumondii).